We begin with the raw amino-acid sequence, 305 residues long: Glycine--tRNA ligase alpha subunit (305 aa).

It belongs to the class-II aminoacyl-tRNA synthetase family. As to quaternary structure, tetramer of two alpha and two beta subunits.

It is found in the cytoplasm. The enzyme catalyses tRNA(Gly) + glycine + ATP = glycyl-tRNA(Gly) + AMP + diphosphate. The polypeptide is Glycine--tRNA ligase alpha subunit (Streptococcus pneumoniae (strain 70585)).